Reading from the N-terminus, the 189-residue chain is Tetratricopeptide repeat protein 36 (189 aa).

TPR repeat units follow at residues 51–84 (SKAL…LPER), 86–118 (SAYN…SGGR), and 123–156 (RQSF…GSPF).

It belongs to the TTC36 family.

In Homo sapiens (Human), this protein is Tetratricopeptide repeat protein 36 (TTC36).